The primary structure comprises 751 residues: Cyanobacterial phytochrome B (751 aa).

A tetrapyrrole is bound at residue cysteine 17. The chromophore binding domain stretch occupies residues 22 to 511 (IHIPGLIQPH…RSAIIGIVLQ (490 aa)). Residues 152–320 (TTTEISQILA…MTSVEMSAKE (169 aa)) enclose the GAF domain. A Histidine kinase domain is found at 536-751 (IASHDLKEPL…STFYFTLQDV (216 aa)). Residue histidine 539 is modified to Phosphohistidine; by autocatalysis.

The protein in the N-terminal section; belongs to the phytochrome family. In terms of processing, contains one covalently linked tetrapyrrole chromophore.

The catalysed reaction is ATP + protein L-histidine = ADP + protein N-phospho-L-histidine.. In terms of biological role, photoreceptor which exists in two forms that are reversibly interconvertible by light: the R form that absorbs maximally in the red region of the spectrum and the FR form that absorbs maximally in the far-red region. The chain is Cyanobacterial phytochrome B (bphB) from Nostoc sp. (strain PCC 7120 / SAG 25.82 / UTEX 2576).